The following is a 1805-amino-acid chain: Cytadherence high molecular weight protein 2 (1805 aa).

4 coiled-coil regions span residues Glu28–Phe838, Glu914–Gln1591, Asp1632–Thr1723, and Asn1777–Ser1804.

Its function is as follows. Component of the cytoskeleton-like structure which stabilizes the shape of the wall-less Mycoplasma. This cytoskeleton-like network of accessory proteins containing HMW proteins 1 to 5 allows the proper anchoring of cytadhesin proteins in the mycoplasmal membrane at the attachment organelle. This is Cytadherence high molecular weight protein 2 (hmw2) from Mycoplasma genitalium (strain ATCC 33530 / DSM 19775 / NCTC 10195 / G37) (Mycoplasmoides genitalium).